The chain runs to 125 residues: uncharacterized protein (125 aa).

Belongs to the HesB/IscA family.

This is an uncharacterized protein from Azospirillum brasilense.